Here is a 130-residue protein sequence, read N- to C-terminus: Ribonuclease P protein component (130 aa).

Belongs to the RnpA family. Consists of a catalytic RNA component (M1 or rnpB) and a protein subunit.

The catalysed reaction is Endonucleolytic cleavage of RNA, removing 5'-extranucleotides from tRNA precursor.. Functionally, RNaseP catalyzes the removal of the 5'-leader sequence from pre-tRNA to produce the mature 5'-terminus. It can also cleave other RNA substrates such as 4.5S RNA. The protein component plays an auxiliary but essential role in vivo by binding to the 5'-leader sequence and broadening the substrate specificity of the ribozyme. The polypeptide is Ribonuclease P protein component (Azotobacter vinelandii (strain DJ / ATCC BAA-1303)).